We begin with the raw amino-acid sequence, 78 residues long: Defensin-like protein 287 (78 aa).

Positions 1-24 (MNNLRVIMSVLLAVLVFTATVSES) are cleaved as a signal peptide. Disulfide bonds link cysteine 39–cysteine 59, cysteine 45–cysteine 64, and cysteine 51–cysteine 66.

The protein belongs to the DEFL family.

The protein resides in the secreted. This Arabidopsis thaliana (Mouse-ear cress) protein is Defensin-like protein 287.